Here is a 384-residue protein sequence, read N- to C-terminus: Dual specificity protein phosphatase 9 (384 aa).

Position 16 is a phosphoserine (Ser16). Positions 18–139 constitute a Rhodanese domain; the sequence is PRPRLLLLDC…FQAECPHLCE (122 aa). A Tyrosine-protein phosphatase domain is found at 203 to 346; it reads FPVQILPNLY…LLDFERSLRL (144 aa). A Phosphoserine modification is found at Ser262. The active-site Phosphocysteine intermediate is the Cys290. The disordered stretch occupies residues 348–384; the sequence is ERHSQEQGSGGQASAASNPPSFFTTPTSDGAFELAPT. Residue Ser351 is modified to Phosphoserine. A compositionally biased stretch (polar residues) spans 359-375; that stretch reads QASAASNPPSFFTTPTS.

This sequence belongs to the protein-tyrosine phosphatase family. Non-receptor class dual specificity subfamily.

It localises to the cytoplasm. The catalysed reaction is O-phospho-L-tyrosyl-[protein] + H2O = L-tyrosyl-[protein] + phosphate. The enzyme catalyses O-phospho-L-seryl-[protein] + H2O = L-seryl-[protein] + phosphate. It carries out the reaction O-phospho-L-threonyl-[protein] + H2O = L-threonyl-[protein] + phosphate. Inactivates MAP kinases. Has a specificity for the ERK family. This is Dual specificity protein phosphatase 9 (DUSP9) from Homo sapiens (Human).